We begin with the raw amino-acid sequence, 40 residues long: Photosystem II reaction center protein Y (40 aa).

The chain crosses the membrane as a helical span at residues 4–22; sequence LLVITLPILAAIGWVTLNI.

Belongs to the PsbY family. PSII is composed of 1 copy each of membrane proteins PsbA, PsbB, PsbC, PsbD, PsbE, PsbF, PsbH, PsbI, PsbJ, PsbK, PsbL, PsbM, PsbT, PsbX, PsbY, Psb30/Ycf12, peripheral proteins PsbO, CyanoQ (PsbQ), PsbU, PsbV and a large number of cofactors. It forms dimeric complexes.

It is found in the cellular thylakoid membrane. In terms of biological role, loosely associated component of the core of photosystem II (PSII), it is not always seen in crystals. PSII is a light-driven water plastoquinone oxidoreductase, using light energy to abstract electrons from H(2)O, generating a proton gradient subsequently used for ATP formation. The chain is Photosystem II reaction center protein Y from Prochlorococcus marinus (strain SARG / CCMP1375 / SS120).